The primary structure comprises 347 residues: GMP reductase (347 aa).

Residue 108 to 131 participates in NADP(+) binding; that stretch reads ADFQKTKDVMALSDELIFICIDIA. K(+)-binding residues include glycine 181 and glycine 183. Cysteine 186 serves as the catalytic Thioimidate intermediate. 216-239 lines the NADP(+) pocket; it reads IIGDGGCTCPGDVAKAFGGGADFV.

The protein belongs to the IMPDH/GMPR family. GuaC type 1 subfamily. In terms of assembly, homotetramer.

The enzyme catalyses IMP + NH4(+) + NADP(+) = GMP + NADPH + 2 H(+). Functionally, catalyzes the irreversible NADPH-dependent deamination of GMP to IMP. It functions in the conversion of nucleobase, nucleoside and nucleotide derivatives of G to A nucleotides, and in maintaining the intracellular balance of A and G nucleotides. The protein is GMP reductase of Vibrio cholerae serotype O1 (strain ATCC 39541 / Classical Ogawa 395 / O395).